A 410-amino-acid chain; its full sequence is Peptidase T (410 aa).

H79 is a Zn(2+) binding site. The active site involves D81. D142 is a Zn(2+) binding site. Residue E176 is the Proton acceptor of the active site. Residues E177, D199, and H381 each coordinate Zn(2+).

This sequence belongs to the peptidase M20B family. The cofactor is Zn(2+).

It is found in the cytoplasm. It carries out the reaction Release of the N-terminal residue from a tripeptide.. In terms of biological role, cleaves the N-terminal amino acid of tripeptides. The protein is Peptidase T of Bacillus pumilus (strain SAFR-032).